The primary structure comprises 488 residues: MDNHTKSFSSLLISLWFTALLILVEMVSCARQHRRSFLAKEADLVTNLPGQPDVSFKHYAGYVPVDKSNGRALFYWFFEAMDLPKEKPLVLWLNGGPGCSSVGYGATQEIGPFLADTNEKGLIFNPYAWNKEVNMLFLESPVGVGFSYSNTSSDYLNLDDHFAKKDAYTFLCNWFEKFPEHKGNEFYIAGESYAGIYVPELAELVYDNNEKNNDLSLHINLKGFLLGNPDISNPDDWRGWVDYAWSHAVISDETHRNINRLCNFSSDDVWNNDKCNEAIAEVDKQYNEIDIYSLYTSACKGDSAKSSYFASAQFKTNYHISSKRMPPRRLAGYDPCLDDYVKVYYNRADVQKALHASDGVNLKNWSICNMEIFHNWTYVVQSVLPIYQKLIAGGLRIWVYSGDTDGCIPVLGTRYSLNALGLPIKTAWRPWYHEKQVSGWVQEYDGLTFATFRGAGHTVPSFKPSSSLAFISAFVKGVPLSSSRVETN.

An N-terminal signal peptide occupies residues 1-28; it reads MDNHTKSFSSLLISLWFTALLILVEMVS. Intrachain disulfides connect cysteine 99/cysteine 368, cysteine 262/cysteine 275, and cysteine 299/cysteine 336. Residue asparagine 150 is glycosylated (N-linked (GlcNAc...) asparagine). Residue serine 192 is part of the active site. N-linked (GlcNAc...) asparagine glycosylation occurs at asparagine 263. N-linked (GlcNAc...) asparagine glycans are attached at residues asparagine 364 and asparagine 375. Residues aspartate 405 and histidine 457 contribute to the active site.

It belongs to the peptidase S10 family. In terms of tissue distribution, expression not detected.

It localises to the secreted. Probable carboxypeptidase. This chain is Putative serine carboxypeptidase-like 30 (SCPL30), found in Arabidopsis thaliana (Mouse-ear cress).